A 674-amino-acid chain; its full sequence is Enzymatic polyprotein (674 aa).

The tract at residues 40-130 (IELHCFVDTG…CQLYEPFIQF (91 aa)) is protease. Asp-47 is a catalytic residue. The 181-residue stretch at 267–447 (LKVIKPSKSP…KKINFLGLEI (181 aa)) folds into the Reverse transcriptase domain.

Belongs to the caulimoviridae enzymatic polyprotein family.

It carries out the reaction DNA(n) + a 2'-deoxyribonucleoside 5'-triphosphate = DNA(n+1) + diphosphate. In terms of biological role, encodes for at least two polypeptides: protease (PR) and reverse transcriptase (RT). The protease processes the polyprotein in cis. Reverse transcriptase is multifunctional enzyme that converts the viral RNA genome into dsDNA in viral cytoplasmic capsids. This enzyme displays a DNA polymerase activity that can copy either DNA or RNA templates, and a ribonuclease H (RNase H) activity that cleaves the RNA strand of RNA-DNA heteroduplexes in a partially processive 3'- to 5'-endonucleasic mode. Neo-synthesized pregenomic RNA (pgRNA) are encapsidated, and reverse-transcribed inside the nucleocapsid. Partial (+)DNA is synthesized from the (-)DNA template and generates the relaxed circular DNA (RC-DNA) genome. After budding and infection, the RC-DNA migrates in the nucleus, and is converted into a plasmid-like covalently closed circular DNA (cccDNA). The sequence is that of Enzymatic polyprotein from Arabidopsis thaliana (Mouse-ear cress).